The following is a 262-amino-acid chain: MAPALLLVPAALASFVLAFGTGVEFVRFTSLRPLLGGIPESGGPDARHGWLAALQDRSILASLAWDLCLLLLFVVQHSLMATEAVKAWTSRYFGVLQRSLYVACTALALQLVMRYWEATPRGPVLWEARAEPWATWVPLLCFVLHVVSWLLIFSILLVFDYAELMGLKQVYYHVLGLGEPLSLKSPRALRLFSHLRHPVCVELLTVLWVVPTLGTDRLLLALLFTLYLGLAHGLDQQDLRYLRSQLQRKLQLLSRPQDGEAE.

Residues 1-4 (MAPA) lie on the Nuclear side of the membrane. Residues 5 to 28 (LLLVPAALASFVLAFGTGVEFVRF) traverse the membrane as a helical segment. Over 29 to 58 (TSLRPLLGGIPESGGPDARHGWLAALQDRS) the chain is Perinuclear space. The helical transmembrane segment at 59–80 (ILASLAWDLCLLLLFVVQHSLM) threads the bilayer. The Nuclear portion of the chain corresponds to 81 to 97 (ATEAVKAWTSRYFGVLQ). Residues 98-114 (RSLYVACTALALQLVMR) traverse the membrane as a helical segment. The Perinuclear space portion of the chain corresponds to 115–133 (YWEATPRGPVLWEARAEPW). Residues 134 to 164 (ATWVPLLCFVLHVVSWLLIFSILLVFDYAEL) form a helical membrane-spanning segment. Topologically, residues 165-191 (MGLKQVYYHVLGLGEPLSLKSPRALRL) are nuclear. A helical membrane pass occupies residues 192-210 (FSHLRHPVCVELLTVLWVV). Residues 211-216 (PTLGTD) lie on the Perinuclear space side of the membrane. A helical transmembrane segment spans residues 217–234 (RLLLALLFTLYLGLAHGL). Over 235–262 (DQQDLRYLRSQLQRKLQLLSRPQDGEAE) the chain is Nuclear.

The protein belongs to the nurim family.

Its subcellular location is the nucleus inner membrane. The protein is Nurim (Nrm) of Rattus norvegicus (Rat).